A 365-amino-acid chain; its full sequence is Chorismate synthase (365 aa).

Positions 48 and 54 each coordinate NADP(+). FMN-binding positions include 125–127 (RSS), 237–238 (NA), Gly277, 292–296 (KPTSS), and Arg318.

The protein belongs to the chorismate synthase family. As to quaternary structure, homotetramer. The cofactor is FMNH2.

The enzyme catalyses 5-O-(1-carboxyvinyl)-3-phosphoshikimate = chorismate + phosphate. The protein operates within metabolic intermediate biosynthesis; chorismate biosynthesis; chorismate from D-erythrose 4-phosphate and phosphoenolpyruvate: step 7/7. Functionally, catalyzes the anti-1,4-elimination of the C-3 phosphate and the C-6 proR hydrogen from 5-enolpyruvylshikimate-3-phosphate (EPSP) to yield chorismate, which is the branch point compound that serves as the starting substrate for the three terminal pathways of aromatic amino acid biosynthesis. This reaction introduces a second double bond into the aromatic ring system. This chain is Chorismate synthase, found in Polaromonas naphthalenivorans (strain CJ2).